The primary structure comprises 801 residues: Sucrose synthase isoform 2 (801 aa).

The interval 271 to 748 (MIFNVVILSP…GLKRIQEKYT (478 aa)) is GT-B glycosyltransferase.

This sequence belongs to the glycosyltransferase 1 family. Plant sucrose synthase subfamily. In terms of assembly, homotetramer. Exclusively expressed in flowers.

It catalyses the reaction an NDP-alpha-D-glucose + D-fructose = a ribonucleoside 5'-diphosphate + sucrose + H(+). Functionally, sucrose-cleaving enzyme that provides UDP-glucose and fructose for various metabolic pathways. The chain is Sucrose synthase isoform 2 from Daucus carota (Wild carrot).